The following is a 373-amino-acid chain: uncharacterized protein (373 aa).

Belongs to the glycosyltransferase 28 family.

This is an uncharacterized protein from Bacillus subtilis (strain 168).